An 85-amino-acid polypeptide reads, in one-letter code: Small ribosomal subunit protein uS17 (85 aa).

It belongs to the universal ribosomal protein uS17 family. As to quaternary structure, part of the 30S ribosomal subunit.

In terms of biological role, one of the primary rRNA binding proteins, it binds specifically to the 5'-end of 16S ribosomal RNA. In Geobacter sp. (strain M21), this protein is Small ribosomal subunit protein uS17.